Reading from the N-terminus, the 268-residue chain is Putative cysteine-rich repeat secretory protein 5 (268 aa).

The first 24 residues, 1-24 (MTGINTHFAVALFCFFSFSLRAMS), serve as a signal peptide directing secretion. 2 consecutive Gnk2-homologous domains span residues 27–129 (SQML…NVSF) and 135–248 (DVPS…ISAL).

Belongs to the cysteine-rich repeat secretory protein family.

Its subcellular location is the secreted. The chain is Putative cysteine-rich repeat secretory protein 5 (CRRSP5) from Arabidopsis thaliana (Mouse-ear cress).